Reading from the N-terminus, the 390-residue chain is Probable NADH-dependent butanol dehydrogenase 2 (390 aa).

Belongs to the iron-containing alcohol dehydrogenase family.

The protein operates within alcohol metabolism; butanol biosynthesis. This is Probable NADH-dependent butanol dehydrogenase 2 (yugK) from Bacillus subtilis (strain 168).